The sequence spans 523 residues: Calcium uptake protein 3, mitochondrial (523 aa).

A mitochondrion-targeting transit peptide spans 1 to 6; sequence MAALRR. The region spanning 226 to 261 is the EF-hand 1 domain; the sequence is PHAGFRIAFNMFDTDGNEMVDKKEFLVLQEIFRKKN. Positions 238, 240, 242, 244, 246, and 249 each coordinate Ca(2+). Positions 395–430 constitute an EF-hand 2; degenerate domain; it reads ENTSVFLENVRYSISEEKGITFDEFRSFFQFLNNLE. The 36-residue stretch at 464 to 499 folds into the EF-hand 3 domain; that stretch reads SPHLVNTVFKIFDVDKDDQLSYKEFIGIMKDRLHRG. Residues Asp476, Asp478, Asp480, Gln482, and Glu487 each contribute to the Ca(2+) site.

This sequence belongs to the MICU1 family. MICU3 subfamily. Heterodimer; disulfide-linked; heterodimerizes with MICU1. Heterodimerizes with isoform 3 of MICU1 (MICU1.1) in skeletal muscle. Component of the uniplex complex, composed of MCU, EMRE/SMDT1, MICU1 and MICU3 in a 4:4:1:1 stoichiometry. In terms of tissue distribution, predominantly expressed in skeletal muscle and central nervous system.

It is found in the mitochondrion intermembrane space. The protein resides in the mitochondrion inner membrane. In terms of biological role, tissue-specific calcium sensor of the mitochondrial calcium uniporter (MCU) channel, which specifically regulates MCU channel activity in the central nervous system and skeletal muscle. Senses calcium level via its EF-hand domains: compared to MICU1 and MICU2, MICU3 has a higher affinity for calcium. MICU1 and MICU3 form a disulfide-linked heterodimer that stimulates and inhibits MCU activity, depending on the concentration of calcium. At low calcium levels, MICU1 occludes the pore of the MCU channel, preventing mitochondrial calcium uptake. At higher calcium levels, calcium-binding to MICU1 and MICU3 induces a conformational change that weakens MCU-MICU1 interactions and moves the MICU1-MICU3 heterodimer away from the pore, allowing calcium permeation through the MCU channel. The high calcium affinity of MICU3 lowers the calcium threshold necessary for calcium permeation through the MCU channel. The MICU1-MICU3 heterodimer promotes flexibility of neurotransmission in neuronal cells by enhancing mitochondrial calcium uptake in presynapses. It is also required to increase mitochondrial calcium uptake in skeletal muscle cells, thereby increasing ATP production. The protein is Calcium uptake protein 3, mitochondrial of Mus musculus (Mouse).